Consider the following 306-residue polypeptide: Homoserine kinase (306 aa).

Residue 91 to 101 coordinates ATP; the sequence is PLARGLGSSAA.

It belongs to the GHMP kinase family. Homoserine kinase subfamily.

It is found in the cytoplasm. The catalysed reaction is L-homoserine + ATP = O-phospho-L-homoserine + ADP + H(+). It functions in the pathway amino-acid biosynthesis; L-threonine biosynthesis; L-threonine from L-aspartate: step 4/5. Its function is as follows. Catalyzes the ATP-dependent phosphorylation of L-homoserine to L-homoserine phosphate. This is Homoserine kinase from Bacillus licheniformis (strain ATCC 14580 / DSM 13 / JCM 2505 / CCUG 7422 / NBRC 12200 / NCIMB 9375 / NCTC 10341 / NRRL NRS-1264 / Gibson 46).